Consider the following 134-residue polypeptide: Nif-regulating protein A (134 aa).

The segment at 3–36 adopts a C4-type; atypical zinc-finger fold; it reads CLECGLVYIVSGLKVPEKISVRVFVNRIEHPFTH.

As to quaternary structure, interacts with the general archaeal transcription factors TBPs.

In terms of biological role, involved in nitrogen regulation. Enhances the transcription of the nitrogen fixation (nif) operon under nitrogen-limited conditions. Acts by binding to the nifH promoter region. This chain is Nif-regulating protein A, found in Methanosarcina mazei (strain ATCC BAA-159 / DSM 3647 / Goe1 / Go1 / JCM 11833 / OCM 88) (Methanosarcina frisia).